We begin with the raw amino-acid sequence, 218 residues long: 3-phospho-D-glycerate guanylyltransferase (218 aa).

Belongs to the CofC family.

The catalysed reaction is (2R)-3-phosphoglycerate + GTP + H(+) = 3-[(R)-glyceryl]-diphospho-5'-guanosine + diphosphate. The protein operates within cofactor biosynthesis; coenzyme F420 biosynthesis. Functionally, guanylyltransferase that catalyzes the activation of (2R)-3-phosphoglycerate (3PG) as 3-[(R)-glyceryl]-diphospho-5'-guanosine, via the condensation of 3PG with GTP. It is involved in the biosynthesis of a derivative of the hydride carrier cofactor coenzyme F420, 3PG-F420. This Phenylobacterium zucineum (strain HLK1) protein is 3-phospho-D-glycerate guanylyltransferase.